The following is a 324-amino-acid chain: Aldo-keto reductase family 1 member A1-A (324 aa).

Residues Gly-10 to Gly-19, Thr-20, Trp-21, and Asp-44 each bind NADP(+). Tyr-49 acts as the Proton donor in catalysis. 12 residues coordinate NADP(+): Ser-161, Asn-162, Ser-210, Leu-212, Ser-214, Lys-262, Ser-263, Val-264, Thr-265, Arg-268, Gln-271, and Asn-272.

The protein belongs to the aldo/keto reductase family.

Its subcellular location is the cytoplasm. The protein localises to the cytosol. The protein resides in the apical cell membrane. The catalysed reaction is a primary alcohol + NADP(+) = an aldehyde + NADPH + H(+). It catalyses the reaction S-nitroso-CoA + NADPH + H(+) = sulfinamide-CoA + NADP(+). It carries out the reaction S-nitrosoglutathione + NADPH + H(+) = S-(hydroxysulfenamide)glutathione + NADP(+). Functionally, catalyzes the NADPH-dependent reduction of a wide variety of carbonyl-containing compounds to their corresponding alcohols. Displays enzymatic activity towards endogenous metabolites such as aromatic and aliphatic aldehydes, ketones, monosaccharides and bile acids. Acts as an aldehyde-detoxification enzyme. Also acts as an inhibitor of protein S-nitrosylation by mediating degradation of S-nitroso-coenzyme A (S-nitroso-CoA), a cofactor required to S-nitrosylate proteins. Also acts as a S-nitroso-glutathione reductase by catalyzing the NADPH-dependent reduction of S-nitrosoglutathione. Displays no reductase activity towards retinoids. The sequence is that of Aldo-keto reductase family 1 member A1-A (akr1a1a) from Danio rerio (Zebrafish).